Here is a 148-residue protein sequence, read N- to C-terminus: Arginine repressor (148 aa).

This sequence belongs to the ArgR family.

The protein resides in the cytoplasm. It functions in the pathway amino-acid biosynthesis; L-arginine biosynthesis [regulation]. In terms of biological role, regulates arginine biosynthesis genes. The polypeptide is Arginine repressor (Chlorobium phaeobacteroides (strain BS1)).